The following is a 215-amino-acid chain: Cytochrome b6 (215 aa).

Residues 32 to 52 form a helical membrane-spanning segment; the sequence is IFYCLGGITFTCFLVQVATGF. Cysteine 35 is a heme c binding site. Residues histidine 86 and histidine 100 each coordinate heme b. A run of 3 helical transmembrane segments spans residues 90-110, 116-136, and 186-206; these read ASMM…TGGF, LTWT…VTGY, and LHTF…FLMI. Residues histidine 187 and histidine 202 each contribute to the heme b site.

Belongs to the cytochrome b family. PetB subfamily. As to quaternary structure, the 4 large subunits of the cytochrome b6-f complex are cytochrome b6, subunit IV (17 kDa polypeptide, PetD), cytochrome f and the Rieske protein, while the 4 small subunits are PetG, PetL, PetM and PetN. The complex functions as a dimer. Requires heme b as cofactor. The cofactor is heme c.

Its subcellular location is the plastid. It localises to the chloroplast thylakoid membrane. Component of the cytochrome b6-f complex, which mediates electron transfer between photosystem II (PSII) and photosystem I (PSI), cyclic electron flow around PSI, and state transitions. The chain is Cytochrome b6 from Stigeoclonium helveticum (Green alga).